The sequence spans 115 residues: MATGGTVRPAEEPEEEEEEEDEAVEEEEEEDYTFLPLVHDIIKCMDKDSQDVYQELNELKSKFQAMRKLVGNMPGIDMSPEEQQRHLQSLREQVQTKSELLQKYKSLCMFEIPKE.

The segment at 1–31 is disordered; that stretch reads MATGGTVRPAEEPEEEEEEEDEAVEEEEEED. Positions 12 to 31 are enriched in acidic residues; the sequence is EPEEEEEEEDEAVEEEEEED. Residues 31–107 adopt a coiled-coil conformation; it reads DYTFLPLVHD…SELLQKYKSL (77 aa).

The protein belongs to the Mediator complex subunit 9 family. Component of the Mediator complex.

The protein localises to the nucleus. Functionally, component of the Mediator complex, a coactivator involved in the regulated transcription of nearly all RNA polymerase II-dependent genes. Mediator functions as a bridge to convey information from gene-specific regulatory proteins to the basal RNA polymerase II transcription machinery. Mediator is recruited to promoters by direct interactions with regulatory proteins and serves as a scaffold for the assembly of a functional preinitiation complex with RNA polymerase II and the general transcription factors. In Xenopus laevis (African clawed frog), this protein is Mediator of RNA polymerase II transcription subunit 9 (med9).